The sequence spans 211 residues: Imidazole glycerol phosphate synthase subunit HisH (211 aa).

Residues 5-211 enclose the Glutamine amidotransferase type-1 domain; the sequence is SVALLDYGSG…QLLRNWVDSL (207 aa). Cys-83 (nucleophile) is an active-site residue. Active-site residues include His-192 and Glu-194.

Heterodimer of HisH and HisF.

The protein resides in the cytoplasm. It catalyses the reaction 5-[(5-phospho-1-deoxy-D-ribulos-1-ylimino)methylamino]-1-(5-phospho-beta-D-ribosyl)imidazole-4-carboxamide + L-glutamine = D-erythro-1-(imidazol-4-yl)glycerol 3-phosphate + 5-amino-1-(5-phospho-beta-D-ribosyl)imidazole-4-carboxamide + L-glutamate + H(+). The enzyme catalyses L-glutamine + H2O = L-glutamate + NH4(+). It functions in the pathway amino-acid biosynthesis; L-histidine biosynthesis; L-histidine from 5-phospho-alpha-D-ribose 1-diphosphate: step 5/9. Functionally, IGPS catalyzes the conversion of PRFAR and glutamine to IGP, AICAR and glutamate. The HisH subunit catalyzes the hydrolysis of glutamine to glutamate and ammonia as part of the synthesis of IGP and AICAR. The resulting ammonia molecule is channeled to the active site of HisF. The sequence is that of Imidazole glycerol phosphate synthase subunit HisH from Nocardia farcinica (strain IFM 10152).